The primary structure comprises 314 residues: MRILFMGTPEFAVPSLRAVAGAGPGFEVVMVVTGPDRPRRSRNSAPEPTPVKQAALELGLRVLEVEDVKDPAFASTVQELRPDVIVVAAFRILPPAVYGAARLGSFNLHASLLPAYRGAAPINHALMQGDRESGVTTFFLQQQVDTGNIILKRSTPVGSDENATELALRLSFIGAEAVLATLRLIAEGRADVSLQDESMASKAPKLTRQNTRIDWNRSAADLHNFIRGLSMRPAAWTTLGGKSVKIFRSAAAPQMSPSSPCAPGSLLIDDGRLYARGTDGWIELLLLQLEGKRPMEAPEFVRGFRPEVTEPQLV.

111-114 (SLLP) serves as a coordination point for (6S)-5,6,7,8-tetrahydrofolate.

The protein belongs to the Fmt family.

It catalyses the reaction L-methionyl-tRNA(fMet) + (6R)-10-formyltetrahydrofolate = N-formyl-L-methionyl-tRNA(fMet) + (6S)-5,6,7,8-tetrahydrofolate + H(+). Attaches a formyl group to the free amino group of methionyl-tRNA(fMet). The formyl group appears to play a dual role in the initiator identity of N-formylmethionyl-tRNA by promoting its recognition by IF2 and preventing the misappropriation of this tRNA by the elongation apparatus. The chain is Methionyl-tRNA formyltransferase from Chlorobium luteolum (strain DSM 273 / BCRC 81028 / 2530) (Pelodictyon luteolum).